We begin with the raw amino-acid sequence, 79 residues long: D-alanyl carrier protein (79 aa).

The Carrier domain occupies 1–77; it reads MDVKAEVIEI…KIVEGVTELR (77 aa). At Ser-35 the chain carries O-(pantetheine 4'-phosphoryl)serine.

It belongs to the DltC family. 4'-phosphopantetheine is transferred from CoA to a specific serine of apo-DCP.

The protein resides in the cytoplasm. Its pathway is cell wall biogenesis; lipoteichoic acid biosynthesis. In terms of biological role, carrier protein involved in the D-alanylation of lipoteichoic acid (LTA). The loading of thioester-linked D-alanine onto DltC is catalyzed by D-alanine--D-alanyl carrier protein ligase DltA. The DltC-carried D-alanyl group is further transferred to cell membrane phosphatidylglycerol (PG) by forming an ester bond, probably catalyzed by DltD. D-alanylation of LTA plays an important role in modulating the properties of the cell wall in Gram-positive bacteria, influencing the net charge of the cell wall. The polypeptide is D-alanyl carrier protein (Streptococcus thermophilus (strain CNRZ 1066)).